The sequence spans 217 residues: uncharacterized protein (217 aa).

Residues 26-48 (VFMRGYVVGLVLALMLVTAPAMA) form a helical membrane-spanning segment.

Its subcellular location is the membrane. This is an uncharacterized protein from Archaeoglobus fulgidus (strain ATCC 49558 / DSM 4304 / JCM 9628 / NBRC 100126 / VC-16).